We begin with the raw amino-acid sequence, 228 residues long: Glutamate transport system permease protein GluC (228 aa).

The next 5 helical transmembrane spans lie at 16-36 (FWVT…FGTI), 64-84 (LTLV…LTLA), 100-120 (AVLG…RSGI), 145-165 (IIFP…LIAL), and 195-215 (LFVV…PMGL). An ABC transmembrane type-1 domain is found at 16 to 217 (FWVTIKLTIY…ILTLPMGLGL (202 aa)).

It belongs to the binding-protein-dependent transport system permease family. HisMQ subfamily. In terms of assembly, the complex is composed of two ATP-binding proteins (GluA), two transmembrane proteins (GluC and GluD) and a solute-binding protein (GluB).

It is found in the cell membrane. Part of the ABC transporter complex GluABCD involved in glutamate uptake. Probably responsible for the translocation of the substrate across the membrane. The chain is Glutamate transport system permease protein GluC from Corynebacterium glutamicum (strain ATCC 13032 / DSM 20300 / JCM 1318 / BCRC 11384 / CCUG 27702 / LMG 3730 / NBRC 12168 / NCIMB 10025 / NRRL B-2784 / 534).